A 157-amino-acid polypeptide reads, in one-letter code: Protein Smg homolog (157 aa).

It belongs to the Smg family.

The polypeptide is Protein Smg homolog (Colwellia psychrerythraea (strain 34H / ATCC BAA-681) (Vibrio psychroerythus)).